A 484-amino-acid chain; its full sequence is Glutamyl-tRNA(Gln) amidotransferase subunit A (484 aa).

Active-site charge relay system residues include K76 and S151. Residue S175 is the Acyl-ester intermediate of the active site.

The protein belongs to the amidase family. GatA subfamily. In terms of assembly, heterotrimer of A, B and C subunits.

It carries out the reaction L-glutamyl-tRNA(Gln) + L-glutamine + ATP + H2O = L-glutaminyl-tRNA(Gln) + L-glutamate + ADP + phosphate + H(+). In terms of biological role, allows the formation of correctly charged Gln-tRNA(Gln) through the transamidation of misacylated Glu-tRNA(Gln) in organisms which lack glutaminyl-tRNA synthetase. The reaction takes place in the presence of glutamine and ATP through an activated gamma-phospho-Glu-tRNA(Gln). The polypeptide is Glutamyl-tRNA(Gln) amidotransferase subunit A (Hahella chejuensis (strain KCTC 2396)).